The primary structure comprises 455 residues: Golgi pH regulator (455 aa).

The next 2 membrane-spanning stretches (helical) occupy residues Ile5–Phe25 and Val46–Leu66. Asn67 carries N-linked (GlcNAc...) asparagine glycosylation. Transmembrane regions (helical) follow at residues Leu79–Val99, Leu111–Phe131, and Val150–Pro170. N-linked (GlcNAc...) asparagine glycans are attached at residues Asn180 and Asn243. The next 4 helical transmembrane spans lie at Gly290–Phe310, Ile343–Leu363, Val378–Ile398, and Trp425–His445.

Belongs to the Golgi pH regulator (TC 1.A.38) family. Homotrimer.

It localises to the golgi apparatus membrane. It carries out the reaction iodide(out) = iodide(in). The enzyme catalyses chloride(in) = chloride(out). It catalyses the reaction bromide(in) = bromide(out). The catalysed reaction is fluoride(in) = fluoride(out). In terms of biological role, voltage-gated channel that enables the transfer of anions such as iodide, chloride, bromide and fluoride which may function in counter-ion conductance and participates in Golgi acidification. The polypeptide is Golgi pH regulator (Gallus gallus (Chicken)).